The chain runs to 727 residues: ABC transporter G family member STR2 (727 aa).

Topologically, residues 1–475 (MKTQGLELET…NFTNIRRTPE (475 aa)) are cytoplasmic. The ABC transporter domain occupies 25 to 275 (LEFESLTYTV…LNRMGRKIPK (251 aa)). ATP is bound at residue 69-76 (GPSGAGKS). A helical transmembrane segment spans residues 476 to 496 (LFLSRLMVLTFMGVMMATMFH). Residues 497-510 (NPKNTLQGITNRLS) are Extracellular-facing. Residues 511–531 (FFIFTVCLFFFSSNDAVPAFI) traverse the membrane as a helical segment. Topologically, residues 532-559 (QERFIFIRETSHNAYRASCYTIASLITH) are cytoplasmic. The chain crosses the membrane as a helical span at residues 560 to 580 (MPFLALQALAYAAIVWFALEL). At 581-583 (RGP) the chain is on the extracellular side. Residues 584–604 (FIYFFLVLFISLLSTNSFVVF) form a helical membrane-spanning segment. Residues 605 to 612 (VSSIVPNY) are Cytoplasmic-facing. A helical transmembrane segment spans residues 613–633 (ILGYAAVIAFTALFFLFCGYF). At 634–699 (LSSEDIPLYW…GTEEIKKRNN (66 aa)) the chain is on the extracellular side. Asn-667 carries an N-linked (GlcNAc...) asparagine glycan. A helical transmembrane segment spans residues 700 to 720 (VLIMLGWAVLYRILFYIILRF). The Cytoplasmic segment spans residues 721-727 (ASKNQRS).

Belongs to the ABC transporter superfamily. ABCG family. Stunted arbuscule (STR) subfamily. As to quaternary structure, heterodimerizes with STR; the resulting transporter is located in the peri-arbuscular membrane. In terms of tissue distribution, expressed constitutively in the vascular tissue of roots.

The protein localises to the cell membrane. Functionally, together with STR, required for arbuscule development in arbuscular mycorrhizal symbiosis. This chain is ABC transporter G family member STR2, found in Medicago truncatula (Barrel medic).